We begin with the raw amino-acid sequence, 338 residues long: MGRELVDKHMDKKANSLTASSTGSSDDNKVPSPSTNEAAEVKECTEQNLVADDARLRQQGITETPGSHKSSVKPRVTAKTTVPKPFSLSAEKPRRAAVDNNSLGNGASHNSSSASRVSQLNSPLPTRRIPDHKMHHDEEDSFSVASSSATSIRSFKPKITIGVAPTFSSTSRLERRREFYQKLEEKQKALEAEKRENEKRLKEEQEAVTKQLRKNMAYKANPVPSFYQEGPPPKQPLKKFPLTRPKSPNLNRRKSCSDTVNASYQEVKGKHCARHRHSVGGCKDEVKTNSVPRTPNSSSKDQMRKSKKGTPKSEEVHEMFNSGHDGETGENGVGVVEE.

Over residues 1–14 (MGRELVDKHMDKKA) the composition is skewed to basic and acidic residues. Residues 1–150 (MGRELVDKHM…SFSVASSSAT (150 aa)) are disordered. Composition is skewed to polar residues over residues 15–37 (NSLT…STNE) and 59–69 (QGITETPGSHK). Over residues 100–115 (NNSLGNGASHNSSSAS) the composition is skewed to low complexity. Residues 128-138 (RIPDHKMHHDE) are compositionally biased toward basic and acidic residues. Residues 177–214 (REFYQKLEEKQKALEAEKRENEKRLKEEQEAVTKQLRK) are a coiled coil. The interval 222-338 (PVPSFYQEGP…GENGVGVVEE (117 aa)) is disordered. Positions 288–300 (TNSVPRTPNSSSK) are enriched in polar residues.

The protein belongs to the TPX2 family. As to expression, expressed in seedlings.

It is found in the cytoplasm. The protein localises to the cytoskeleton. In terms of biological role, microtubule-associated protein (MAP) that regulates the orientation of interphase cortical microtubules. This chain is Protein WVD2-like 2, found in Arabidopsis thaliana (Mouse-ear cress).